The following is a 1441-amino-acid chain: Cleavage and polyadenylation specificity factor subunit 1 (1441 aa).

Disordered regions lie at residues 404 to 435 (PASS…GGKT), 545 to 569 (EEET…DGRR), 713 to 775 (GGAR…PAPF), and 899 to 921 (FREK…EGSG). Residues 410–419 (EAADKEEPPS) are compositionally biased toward basic and acidic residues. S754 and S764 each carry phosphoserine. Over residues 756-773 (SKEEARRSSQPPADRDPA) the composition is skewed to basic and acidic residues.

Belongs to the CPSF1 family. As to quaternary structure, component of the cleavage and polyadenylation specificity factor (CPSF) complex, composed of CPSF1, CPSF2, CPSF3, CPSF4 and FIP1L1. Found in a complex with CPSF1, FIP1L1 and PAPOLA. Interacts with FIP1L1 and SRRM1. Interacts with TUT1; the interaction is direct and mediates the recruitment of the CPSF complex on the 3'UTR of selected pre-mRNAs. Interacts with TENT2/GLD2.

The protein localises to the nucleus. The protein resides in the nucleoplasm. Component of the cleavage and polyadenylation specificity factor (CPSF) complex that plays a key role in pre-mRNA 3'-end formation, recognizing the AAUAAA signal sequence and interacting with poly(A) polymerase and other factors to bring about cleavage and poly(A) addition. This subunit is involved in the RNA recognition step of the polyadenylation reaction. May play a role in eye morphogenesis and the development of retinal ganglion cell projections to the midbrain. In Mus musculus (Mouse), this protein is Cleavage and polyadenylation specificity factor subunit 1 (Cpsf1).